We begin with the raw amino-acid sequence, 692 residues long: Catalase-B (692 aa).

Residues H69 and N142 contribute to the active site. Heme is bound at residue Y356.

Belongs to the catalase family. The cofactor is heme.

Its subcellular location is the cytoplasm. It carries out the reaction 2 H2O2 = O2 + 2 H2O. Its function is as follows. Occurs in almost all aerobically respiring organisms and serves to protect cells from the toxic effects of hydrogen peroxide. Its accumulation in prespore cells affords the spores protection from oxidation during prolonged dormancy. Required for normal developmental timing, possibly through a regulatory role in differentiation and morphogenesis. This is Catalase-B (catB) from Dictyostelium discoideum (Social amoeba).